We begin with the raw amino-acid sequence, 498 residues long: Fascin-3 (498 aa).

Belongs to the fascin family. In terms of tissue distribution, expressed in testis.

Its subcellular location is the cytoplasm. The protein localises to the cytoskeleton. Its function is as follows. Acts as an actin bundling protein. The sequence is that of Fascin-3 (FSCN3) from Homo sapiens (Human).